The sequence spans 768 residues: uncharacterized protein (768 aa).

To E.coli YkiA.

This is an uncharacterized protein from Escherichia coli (strain K12).